We begin with the raw amino-acid sequence, 272 residues long: Phosphoglycolate phosphatase (272 aa).

Catalysis depends on D19, which acts as the Nucleophile. Residues D19, D21, and D182 each contribute to the Mg(2+) site.

It belongs to the HAD-like hydrolase superfamily. CbbY/CbbZ/Gph/YieH family. It depends on Mg(2+) as a cofactor.

The catalysed reaction is 2-phosphoglycolate + H2O = glycolate + phosphate. It functions in the pathway organic acid metabolism; glycolate biosynthesis; glycolate from 2-phosphoglycolate: step 1/1. Functionally, specifically catalyzes the dephosphorylation of 2-phosphoglycolate. Is involved in the dissimilation of the intracellular 2-phosphoglycolate formed during the DNA repair of 3'-phosphoglycolate ends, a major class of DNA lesions induced by oxidative stress. The polypeptide is Phosphoglycolate phosphatase (Pseudomonas putida (strain ATCC 47054 / DSM 6125 / CFBP 8728 / NCIMB 11950 / KT2440)).